A 284-amino-acid polypeptide reads, in one-letter code: MKKLTTLLLASTLLIAACGNDDSKKDDSKTSKKDDGVKAELKQATKAYDKYTDEQLNEFLKGTEKFVKAIENNDMAQAKALYPKVRMYYERSEPVAEAFGDLDPKIDARLADMKEEKKEKEWSGYHKIEKALYEDKKIDDVTKKDAQQLLKNAKELHAKADTLDITPKLMLQGSVDLLNEVATSKITGEEEIYSHTDLYDFKANVEGAQKIYDLFKPILEKKDKKLSDDIQMNFDKVNKLLDKYKDNNGGYESFEKVSKKDRKAFADAVNALGEPLSKMAVITE.

The first 17 residues, 1 to 17 (MKKLTTLLLASTLLIAA), serve as a signal peptide directing secretion. Residue cysteine 18 is the site of N-palmitoyl cysteine attachment. A lipid anchor (S-diacylglycerol cysteine) is attached at cysteine 18.

It belongs to the EfeM/EfeO family.

It is found in the cell membrane. The polypeptide is Efem/EfeO family lipoprotein (Staphylococcus aureus (strain MRSA252)).